Consider the following 295-residue polypeptide: Small ribosomal subunit biogenesis GTPase RsgA (295 aa).

In terms of domain architecture, CP-type G spans 68 to 228 (KNLLTKPHVA…VVDTPGFANL (161 aa)). GTP is bound by residues 117 to 120 (NKMD) and 170 to 178 (GLSGVGKSS). Positions 250, 255, 257, and 263 each coordinate Zn(2+).

Belongs to the TRAFAC class YlqF/YawG GTPase family. RsgA subfamily. In terms of assembly, monomer. Associates with 30S ribosomal subunit, binds 16S rRNA. Requires Zn(2+) as cofactor.

It localises to the cytoplasm. In terms of biological role, one of several proteins that assist in the late maturation steps of the functional core of the 30S ribosomal subunit. Helps release RbfA from mature subunits. May play a role in the assembly of ribosomal proteins into the subunit. Circularly permuted GTPase that catalyzes slow GTP hydrolysis, GTPase activity is stimulated by the 30S ribosomal subunit. The protein is Small ribosomal subunit biogenesis GTPase RsgA of Thermotoga maritima (strain ATCC 43589 / DSM 3109 / JCM 10099 / NBRC 100826 / MSB8).